The sequence spans 150 residues: Transcriptional repressor NrdR (150 aa).

The segment at 3-34 (CPFCHHPQSRVIDSRTVENGFVTRRRRQCTKC) is a zinc-finger region. The region spanning 46-136 (LLVEKRNGVT…VYKSFSSMED (91 aa)) is the ATP-cone domain.

It belongs to the NrdR family. It depends on Zn(2+) as a cofactor.

Its function is as follows. Negatively regulates transcription of bacterial ribonucleotide reductase nrd genes and operons by binding to NrdR-boxes. The polypeptide is Transcriptional repressor NrdR (Corynebacterium kroppenstedtii (strain DSM 44385 / JCM 11950 / CIP 105744 / CCUG 35717)).